A 1472-amino-acid chain; its full sequence is MAVSGCTNDNSFGPIVQGCRGDFDFTLRFQNIILGILPAAIFILLALTRVATLAFRSRIVGGKVLQFTKLAVIAATAALQLVLLILSSTSNDESVDGDTFAVANSALGFSQWIVTLALSFAEHSRAPRPSSILTLYLLLQILLDVTRCRSYWLLATSFQITRYAGVFTATIGLKVITLLLELQNKARWMTWRKEDHSPEETSSLFNLGVYFWLIGIFRNGFKKTLSIKDDLYLLDHEMQSKILLDRLTISFAKSSANVGKRFRLAKALGRALIVPLILPVVPRIAMIGFQYAQPFFIHALLEYLIHKDVPKNDGYGLIGAALIIYAGIAISDALFWYFHQRCLYMARGCLASYVYRSTTQGKMTDIGDAAVLTLMSTDVERIIYGFHGLHDFWANIIEIGLGCFLLQRQLGLAFISPIVVILLCVAATTAIAWAIGERQSRWMAKIESRVGLTSSIISNIKSLRISGITAPVRDLVQKMREQELSIGNKFRWLLIMTATVAFVPSAMSPVVAFAFTNEQLDTLKIFVSFSFITLLTNPLGAMFQSVPAVIAAFVCLERIQKFLEIEPRVDYRKSSRPLSPADGSLLEQDDEKPLGLGQGASKSLISIVDGSFGWTSEKMTLTGISVDVPVGKLTLVVGPVASGKSTFCKALLGEVPFSSGEVIVPSTEAPIGYCEQTPFLKNGSIRDNIIWHSVYNQTRYEEVLDACLLRTDLDILPEGDATTIGSNGIMLSGGQKQRVSLARALYLETDFLLIDDILSGLDNSTGNDVFRRVFGPNGLMRRRNATAILCTHAIRYLPLADHIIILATDGTVGEQGSFDKLAETGIYIPTLGLSDADDASSTNSSIPVEETVAATMPVPLTAFSTVSIGHLEAESRSTGDAKVYRHYYQSVNGWATMTCLLSGIMYAVGRNFPSIWMGWWGSNSFDRTSSFYIGIMGLFRGLQIISLFLCATAVVIFMTTQSGKLLHNEILNTLVNAPLRFFTTTDFGAVTNLFSQDMTLIDGELPISLLNTVIQIFDVFAMAVVVAVGAPWLAIAYPVVFSIIYMLQMFYLRTSRQLRLLDLEAKSPLYAHFLDTIRGIATVRAQKLRDQEILFNQDLLNLSQRPAYLLAMAQRFLATFLNLIVMVLAVGVVAISTQLRTNSGFAGSSLVTLMSWGESISSLIQYYTQVEVSIGAVSRLKAFAQNVPSENLDQEDLEPAEEWPTQGDIAIRGVSASYKNDDESPASEDDEESPNLALEDLTILVKPGQKVALCGRTGSGKSSIILLLLRLLDPLSNQSENIVIDGVPYNRVNRSILRRRLIAVPQDPVFLPDGSSIKENLDPFNVASDEECLAVLEDVRLTKFATDHGSIHAGIRADELSAGQKQLFSLGRAVLRRRVKQRLFSIHGGVLLLDEVSSSVDSATDNLVQEIIKEEFADYTIVMVSHRLNIVMEYFDSVVVLDRGRVVETGDPRDLAKTEGSWFSQLWAMEKK.

The next 11 helical transmembrane spans lie at 32 to 52 (IILG…RVAT), 67 to 87 (FTKL…LILS), 100 to 120 (FAVA…ALSF), 163 to 183 (YAGV…LELQ), 197 to 217 (SPEE…IGIF), 271 to 291 (ALIV…GFQY), 316 to 336 (GLIG…ALFW), 386 to 406 (FHGL…CFLL), 412 to 432 (LAFI…TAIA), 493 to 513 (LLIM…VVAF), and 534 to 554 (LLTN…AAFV). Positions 284-551 (IAMIGFQYAQ…MFQSVPAVIA (268 aa)) constitute an ABC transmembrane type-1 1 domain. Residues 605–834 (ISIVDGSFGW…GIYIPTLGLS (230 aa)) enclose the ABC transporter 1 domain. 638 to 645 (GPVASGKS) serves as a coordination point for ATP. N-linked (GlcNAc...) asparagine glycosylation is found at N682, N696, N763, N784, and N843. 4 helical membrane passes run 900 to 920 (LLSG…MGWW), 938 to 958 (LFRG…VIFM), 1003 to 1023 (GELP…FAMA), and 1024 to 1044 (VVVA…FSII). The 240-residue stretch at 900–1139 (LLSGIMYAVG…VGVVAISTQL (240 aa)) folds into the ABC transmembrane type-1 2 domain. N1101 carries N-linked (GlcNAc...) asparagine glycosylation. A helical transmembrane segment spans residues 1116-1136 (FLATFLNLIVMVLAVGVVAIS). Positions 1218-1468 (YKNDDESPAS…EGSWFSQLWA (251 aa)) constitute an ABC transporter 2 domain. 1255-1262 (GRTGSGKS) lines the ATP pocket. 2 N-linked (GlcNAc...) asparagine glycosylation sites follow: N1277 and N1293.

The protein belongs to the ABC transporter superfamily. ABCC family. Conjugate transporter (TC 3.A.1.208) subfamily.

It localises to the cell membrane. Its pathway is secondary metabolite biosynthesis. Its function is as follows. ABC transporter; part of the Fg3_54/C64 gene cluster that mediates the biosynthesis of the octapeptide fusaoctaxin A, a virulence factor that is required for cell-to-cell invasiveness of plant host. The 2 nonribosomal peptide synthetases NRPS9 and NRPS5 form an assembly line which likely utilizes GABA as a starter unit (loaded on the unique module M1 of NRPS9) and sequentially incorporates seven extender units composed of the residues L-Ala, L-allo-Ile, L-Ser, L-Val, L-Ser, L-Leu and L-Leu, respectively. During the process, each of the residues that are tethered on modules M3-M7 of NRPS5 containing an E domain can undergo an epimerization reaction to produce a D-configuration before the transpeptidation reaction occurs. The elongation of the peptidyl chain might be terminated by module M8-mediated L-Leu incorporation, followed by R domain-catalyzed 4 electron reduction to release the resulting octapeptide from the assembly line as an alcohol. Fusaoctaxin A is cleaved by the cluster specific ABC transporter FGM5 to the pentapeptide fusapentaxin A and the tripeptide fusatrixin A. The other enzymes from the cluster, FGM1, FGM2, FGM3 and FGM9 seem not to be involved in the biosynthesis of fusaoctaxin A and their functions have still to be determined. The polypeptide is ABC transporter FGM5 (Gibberella zeae (strain ATCC MYA-4620 / CBS 123657 / FGSC 9075 / NRRL 31084 / PH-1) (Wheat head blight fungus)).